We begin with the raw amino-acid sequence, 307 residues long: Serine/threonine-protein phosphatase PP2A-2 catalytic subunit (307 aa).

Positions 55, 57, 83, and 115 each coordinate Mn(2+). H116 acts as the Proton donor in catalysis. Positions 165 and 239 each coordinate Mn(2+).

It belongs to the PPP phosphatase family. PP-2A subfamily. Requires Mn(2+) as cofactor.

It localises to the cytoplasm. The catalysed reaction is O-phospho-L-seryl-[protein] + H2O = L-seryl-[protein] + phosphate. The enzyme catalyses O-phospho-L-threonyl-[protein] + H2O = L-threonyl-[protein] + phosphate. This Oryza sativa subsp. indica (Rice) protein is Serine/threonine-protein phosphatase PP2A-2 catalytic subunit (PP2A2).